A 917-amino-acid polypeptide reads, in one-letter code: Autophagy-related protein 9 (917 aa).

At 1–226 the chain is on the cytoplasmic side; it reads MASNIFSRLV…AGFWCIIVQR (226 aa). Disordered regions lie at residues 16–37 and 119–177; these read RSFY…RAGI and LLLS…QGRP. The chain crosses the membrane as a helical span at residues 227-247; sequence ILELVNAAFVAVFLTFLSQCV. The Lumenal portion of the chain corresponds to 248 to 275; it reads DYHKLPHSKKMEDIIIPKCTQNMSLVWN. A glycan (N-linked (GlcNAc...) asparagine) is linked at asparagine 269. A helical transmembrane segment spans residues 276–296; sequence VGLWLFAIYFICRCFGLIIQL. At 297–442 the chain is on the cytoplasmic side; the sequence is RQLKHLRDFY…RQLSQKLKSR (146 aa). The stretch at 443–463 is an intramembrane region; it reads FFFAGLMIFVMSPFIALYLIL. The Cytoplasmic portion of the chain corresponds to 464 to 539; that stretch reads VYFLTYFHEF…ARTVSFITGS (76 aa). The helical transmembrane segment at 540-560 threads the bilayer; that stretch reads IVAVLGLATIFDSEAFLTFEI. At 561–564 the chain is on the lumenal side; the sequence is TPDR. Residues 565-585 traverse the membrane as a helical segment; sequence SVLFYVSILATLWAVARGNIS. Residues 586–633 lie on the Cytoplasmic side of the membrane; that stretch reads DDNEVYDPEFAMKSIIEFTHYEPDHWRGRLHSTEVKNEFSELYKPRPQ. Position 621 is an N6-acetyllysine (lysine 621). Residues 634–654 lie within the membrane without spanning it; that stretch reads IFLEEILSILLTPLVLLVSLP. The Cytoplasmic segment spans residues 655–917; it reads NSTDQIVDFF…FQQAHMHLRR (263 aa). A disordered region spans residues 854 to 895; that stretch reads DARFGKLGDEDIDESGGALDESTWQTSPTKTLSRENSGANPQ. A compositionally biased stretch (polar residues) spans 875–895; that stretch reads STWQTSPTKTLSRENSGANPQ.

The protein belongs to the ATG9 family. Homotrimer; forms a homotrimer with a central pore that forms a path between the two membrane leaflets. Interacts with HAT1. In terms of processing, acetylated by HAT1 at Lys-621, which increases the ability to bind vesicles during nutrient starvation induction. Post-translationally, phosphorylated by ATG1. ATG1 phosphorylation is required for preautophagosome elongation.

The protein localises to the preautophagosomal structure membrane. The protein resides in the cytoplasmic vesicle membrane. Its subcellular location is the vacuole membrane. It is found in the golgi apparatus membrane. It localises to the endoplasmic reticulum membrane. The catalysed reaction is a 1,2-diacyl-sn-glycero-3-phosphocholine(in) = a 1,2-diacyl-sn-glycero-3-phosphocholine(out). It carries out the reaction a 1,2-diacyl-sn-glycero-3-phospho-L-serine(in) = a 1,2-diacyl-sn-glycero-3-phospho-L-serine(out). It catalyses the reaction a 1,2-diacyl-sn-glycero-3-phosphoethanolamine(in) = a 1,2-diacyl-sn-glycero-3-phosphoethanolamine(out). The enzyme catalyses a 1,2-diacyl-sn-glycero-3-phospho-(1D-myo-inositol-3-phosphate)(in) = a 1,2-diacyl-sn-glycero-3-phospho-(1D-myo-inositol-3-phosphate)(out). In terms of biological role, phospholipid scramblase involved in autophagy and cytoplasm to vacuole transport (Cvt) vesicle formation. Cycles between the preautophagosomal structure/phagophore assembly site (PAS) and the cytoplasmic vesicle pool and supplies membrane for the growing autophagosome. Lipid scramblase activity plays a key role in preautophagosomal structure/phagophore assembly by distributing the phospholipids that arrive through ATG2 from the cytoplasmic to the luminal leaflet of the bilayer, thereby driving autophagosomal membrane expansion. Required for mitophagy. Also involved in endoplasmic reticulum-specific autophagic process and is essential for the survival of cells subjected to severe ER stress. Different machineries are required for anterograde trafficking to the PAS during either the Cvt pathway or bulk autophagy and for retrograde trafficking. Plays a role in appressorium formation and pathogenicity. The protein is Autophagy-related protein 9 of Pyricularia oryzae (strain 70-15 / ATCC MYA-4617 / FGSC 8958) (Rice blast fungus).